The chain runs to 75 residues: Disintegrin CTF-II (75 aa).

Positions 1 to 75 (ELLEEGEDCY…SDDCPRWNDL (75 aa)) constitute a Disintegrin domain. Intrachain disulfides connect Cys9–Cys24, Cys11–Cys19, Cys18–Cys41, Cys32–Cys38, Cys37–Cys62, and Cys50–Cys69. The Cell attachment site signature appears at 54 to 56 (RGD).

The protein belongs to the venom metalloproteinase (M12B) family. P-II subfamily. P-IIa sub-subfamily. In terms of assembly, monomer (disintegrin). Expressed by the venom gland.

Its subcellular location is the secreted. In terms of biological role, inhibits fibrinogen interaction with platelet receptors, and inhibits aggregation induced by ADP, thrombin, collagen and platelet-activating factor. Acts by binding to the alpha-IIb/beta-3 (ITGA2B/ITGB3) on the platelet surface. This chain is Disintegrin CTF-II, found in Protobothrops flavoviridis (Habu).